Consider the following 148-residue polypeptide: Large ribosomal subunit protein bL9 (148 aa).

It belongs to the bacterial ribosomal protein bL9 family.

Functionally, binds to the 23S rRNA. The sequence is that of Large ribosomal subunit protein bL9 from Pelotomaculum thermopropionicum (strain DSM 13744 / JCM 10971 / SI).